Reading from the N-terminus, the 474-residue chain is Protein U79/U80 (474 aa).

Composition is skewed to basic and acidic residues over residues 156 to 165 (DRKKHDDEHR) and 175 to 219 (RKVE…KRQK). Disordered stretches follow at residues 156 to 219 (DRKK…KRQK) and 412 to 441 (SGQN…SRTQ). Basic residues predominate over residues 417–432 (GRARGRGRGRAPRRRN).

It belongs to the herpesviridae U79/UL112 family.

The protein resides in the host nucleus. May be involved in DNA replication. In Homo sapiens (Human), this protein is Protein U79/U80 (U79/U80).